The primary structure comprises 395 residues: Multiple organellar RNA editing factor 8, chloroplastic/mitochondrial (395 aa).

The transit peptide at 1–56 (MATHTISRSILCRPAKSLSFLFTRSFASSAPLAKSPASSLLSRSRPLVAAFSSVFR) directs the protein to the chloroplast and mitochondrion. Residues 211 to 236 (ANERNRRNDRPRNNDRSRNFERRREN) show a composition bias toward basic and acidic residues. A disordered region spans residues 211–395 (ANERNRRNDR…RDGSGNPYQG (185 aa)). Over residues 240-300 (GPPPQRPPMG…GPRHPPPYGA (61 aa)) the composition is skewed to pro residues. Residues 313–334 (QNYGGTPPPNYGGAPPANNMGG) are compositionally biased toward low complexity. The segment covering 335-355 (APPPNYGGGPPPQYGAVPPPQ) has biased composition (pro residues). Residues 356–385 (YGGAPPQNNNYQQQGSGMQQPQYQNNYPPN) are compositionally biased toward low complexity.

The protein belongs to the MORF family. In terms of assembly, interacts with protoporphyrinogen oxidase 1 PPOX1. Interacts with PCMP-H52/MEF10. Homodimer and heterodimers with MORF1/RIP8, MORF2/RIP2, MORF3/RIP3, MORF4/RIP4, MORF5/RIP5, MORF6/RIP6 and MORF7/RIP7. Interacts with RBG3/ORRM3. Interacts with PCMP-A2/PMD1. Interacts with ORRM1 and VAT3/OZ1. Interacts with PCMP-H13/MEF35. Interacts with RBG5/ORRM4. Interacts with ORRM6.

The protein localises to the mitochondrion. The protein resides in the plastid. It localises to the chloroplast. Its function is as follows. Involved in organellar RNA editing. Required for the processing of numerous RNA editing sites in mitochondria and plastids. Binds to the plastid RARE1 factor, a pentatricopeptide repeat-containing protein involved in RNA editing. This chain is Multiple organellar RNA editing factor 8, chloroplastic/mitochondrial, found in Arabidopsis thaliana (Mouse-ear cress).